The primary structure comprises 176 residues: Disulfide bond formation protein B (176 aa).

The Cytoplasmic segment spans residues 1 to 11 (MLQLTTYRNLQ). Residues 12-28 (VFLVIMTAIGMSFALFF) form a helical membrane-spanning segment. Residues 29–46 (LQRYMGFSPCPLCIFQRI) lie on the Periplasmic side of the membrane. Cys38 and Cys41 are oxidised to a cystine. The helical transmembrane segment at 47 to 63 (GLMIMGGFALIAALFHP) threads the bilayer. Topologically, residues 64–70 (KSMVIRL) are cytoplasmic. A helical membrane pass occupies residues 71-88 (LLWLGSLAGIGWAAIVAG). Residues 89–145 (RHVWLQHLPADQVPSCGPGLDYWLDTLPMQQVLKEVFAGSGECASIEWTFLGLSIPE) lie on the Periplasmic side of the membrane. A disulfide bond links Cys104 and Cys131. A helical transmembrane segment spans residues 146–164 (QSLILFSILILTHLLILWR). At 165–176 (IVRPSTPKPLAR) the chain is on the cytoplasmic side.

It belongs to the DsbB family.

It localises to the cell inner membrane. Its function is as follows. Required for disulfide bond formation in some periplasmic proteins. Acts by oxidizing the DsbA protein. This chain is Disulfide bond formation protein B, found in Psychrobacter arcticus (strain DSM 17307 / VKM B-2377 / 273-4).